The following is a 397-amino-acid chain: Tryptophan synthase beta chain (397 aa).

Lysine 87 carries the post-translational modification N6-(pyridoxal phosphate)lysine.

Belongs to the TrpB family. As to quaternary structure, tetramer of two alpha and two beta chains. Pyridoxal 5'-phosphate serves as cofactor.

It carries out the reaction (1S,2R)-1-C-(indol-3-yl)glycerol 3-phosphate + L-serine = D-glyceraldehyde 3-phosphate + L-tryptophan + H2O. Its pathway is amino-acid biosynthesis; L-tryptophan biosynthesis; L-tryptophan from chorismate: step 5/5. In terms of biological role, the beta subunit is responsible for the synthesis of L-tryptophan from indole and L-serine. This Salmonella arizonae (strain ATCC BAA-731 / CDC346-86 / RSK2980) protein is Tryptophan synthase beta chain.